Here is an 86-residue protein sequence, read N- to C-terminus: Weak neurotoxin 10 (86 aa).

A signal peptide spans 1–21 (MKTLLLTLVVVTIVCLDLGYT). Disulfide bonds link C24–C45, C27–C32, C38–C63, C67–C78, and C79–C84.

Belongs to the three-finger toxin family. Ancestral subfamily. Orphan group II sub-subfamily. Expressed by the venom gland.

The protein resides in the secreted. Its function is as follows. Binds with low affinity to muscular (alpha-1-beta-1-delta-epsilon/CHRNA1-CHRNB1-CHRND-CHRNE) and very low affinity to neuronal (alpha-7/CHRNA7) nicotinic acetylcholine receptor (nAChR). The sequence is that of Weak neurotoxin 10 (WNTX10) from Naja sputatrix (Malayan spitting cobra).